A 202-amino-acid polypeptide reads, in one-letter code: Nudix hydrolase 13, mitochondrial (202 aa).

The region spanning 18–167 (NFRLVSGCIP…WMQSALEEFL (150 aa)) is the Nudix hydrolase domain. A Nudix box motif is present at residues 65 to 86 (GGWEDDETVLEAASREAMEEAG). Mg(2+) contacts are provided by E80 and E84.

Belongs to the Nudix hydrolase family. Monomer. Requires Mg(2+) as cofactor. As to expression, expressed in roots, leaves, stems and inflorescences.

It is found in the mitochondrion. Inhibited by fluoride. Functionally, mediates the hydrolysis of some nucleoside diphosphate derivatives. Can use diadenosine 5',5'''-P(1)P(6) hexaphosphate (Ap(6)A), diadenosine 5',5'''-P(1)P(5) pentaphosphate (Ap(5)A) and adenosine tetraphosphate (p(4)A) as substrates, but not diadenosine 5',5'''-P(1)P(4) tetraphosphate (Ap(4)A), diadenosine 5',5'''-P(1)P(3) triphosphate (Ap(3)A), deoxyribonucleoside triphosphates, ribonucleoside triphosphates, diphosphoinositol pentakisphosphate (PP-InsP(5)) and 5-phospho-alpha-D-ribosyl diphosphate (PRPP). This Arabidopsis thaliana (Mouse-ear cress) protein is Nudix hydrolase 13, mitochondrial (NUDT13).